The primary structure comprises 94 residues: Co-chaperonin GroES (94 aa).

It belongs to the GroES chaperonin family. In terms of assembly, heptamer of 7 subunits arranged in a ring. Interacts with the chaperonin GroEL.

Its subcellular location is the cytoplasm. Together with the chaperonin GroEL, plays an essential role in assisting protein folding. The GroEL-GroES system forms a nano-cage that allows encapsulation of the non-native substrate proteins and provides a physical environment optimized to promote and accelerate protein folding. GroES binds to the apical surface of the GroEL ring, thereby capping the opening of the GroEL channel. The sequence is that of Co-chaperonin GroES from Streptococcus pneumoniae (strain 70585).